The sequence spans 308 residues: Ornithine carbamoyltransferase (308 aa).

Carbamoyl phosphate-binding positions include 55–58 (STRT), Gln-82, Arg-106, and 133–136 (HPCQ). L-ornithine contacts are provided by residues Asn-164, Asp-227, and 231 to 232 (SM). Residues 267-268 (CL) and Arg-295 contribute to the carbamoyl phosphate site.

The protein belongs to the aspartate/ornithine carbamoyltransferase superfamily. OTCase family.

The protein localises to the cytoplasm. It carries out the reaction carbamoyl phosphate + L-ornithine = L-citrulline + phosphate + H(+). Its pathway is amino-acid biosynthesis; L-arginine biosynthesis; L-arginine from L-ornithine and carbamoyl phosphate: step 1/3. Its function is as follows. Reversibly catalyzes the transfer of the carbamoyl group from carbamoyl phosphate (CP) to the N(epsilon) atom of ornithine (ORN) to produce L-citrulline. This is Ornithine carbamoyltransferase from Prochlorococcus marinus subsp. pastoris (strain CCMP1986 / NIES-2087 / MED4).